The following is a 337-amino-acid chain: ATP-dependent 6-phosphofructokinase (337 aa).

Gly-11 contributes to the ATP binding site. Residue 21–25 (RAVVR) coordinates ADP. Residues 72–73 (RY) and 102–105 (GDGS) contribute to the ATP site. Residue Asp-103 coordinates Mg(2+). 125-127 (TID) lines the substrate pocket. The active-site Proton acceptor is the Asp-127. ADP is bound at residue Arg-154. Substrate is bound by residues Arg-162 and 169 to 171 (MGR). ADP-binding positions include 185 to 187 (GAD), Arg-212, and 214 to 216 (KNH). Residues Glu-223, Arg-245, and 251-254 (HILR) each bind substrate.

It belongs to the phosphofructokinase type A (PFKA) family. ATP-dependent PFK group I subfamily. Prokaryotic clade 'B1' sub-subfamily. In terms of assembly, homotetramer. The cofactor is Mg(2+).

It localises to the cytoplasm. It carries out the reaction beta-D-fructose 6-phosphate + ATP = beta-D-fructose 1,6-bisphosphate + ADP + H(+). It functions in the pathway carbohydrate degradation; glycolysis; D-glyceraldehyde 3-phosphate and glycerone phosphate from D-glucose: step 3/4. Allosterically activated by ADP and other diphosphonucleosides, and allosterically inhibited by phosphoenolpyruvate. In terms of biological role, catalyzes the phosphorylation of D-fructose 6-phosphate to fructose 1,6-bisphosphate by ATP, the first committing step of glycolysis. In Streptococcus equi subsp. zooepidemicus (strain H70), this protein is ATP-dependent 6-phosphofructokinase.